The sequence spans 204 residues: Proteasome subunit beta type-3-B (204 aa).

The protein belongs to the peptidase T1B family. Component of the 20S core complex of the 26S proteasome. The 26S proteasome is composed of a core protease (CP), known as the 20S proteasome, capped at one or both ends by the 19S regulatory particle (RP/PA700). The 20S proteasome core is composed of 28 subunits that are arranged in four stacked rings, resulting in a barrel-shaped structure. The two end rings are each formed by seven alpha subunits, and the two central rings are each formed by seven beta subunits. The catalytic chamber with the active sites is on the inside of the barrel.

It is found in the cytoplasm. The protein localises to the nucleus. Its function is as follows. Non-catalytic component of the proteasome, a multicatalytic proteinase complex which is characterized by its ability to cleave peptides with Arg, Phe, Tyr, Leu, and Glu adjacent to the leaving group at neutral or slightly basic pH. The proteasome has an ATP-dependent proteolytic activity. The chain is Proteasome subunit beta type-3-B (PBC2) from Arabidopsis thaliana (Mouse-ear cress).